We begin with the raw amino-acid sequence, 211 residues long: Large ribosomal subunit protein uL3 (211 aa).

Glutamine 150 carries the post-translational modification N5-methylglutamine.

Belongs to the universal ribosomal protein uL3 family. Part of the 50S ribosomal subunit. Forms a cluster with proteins L14 and L19. In terms of processing, methylated by PrmB.

Its function is as follows. One of the primary rRNA binding proteins, it binds directly near the 3'-end of the 23S rRNA, where it nucleates assembly of the 50S subunit. In Pseudomonas putida (strain GB-1), this protein is Large ribosomal subunit protein uL3.